A 511-amino-acid chain; its full sequence is Maturase K (511 aa).

It belongs to the intron maturase 2 family. MatK subfamily.

It localises to the plastid. It is found in the chloroplast. Functionally, usually encoded in the trnK tRNA gene intron. Probably assists in splicing its own and other chloroplast group II introns. The sequence is that of Maturase K from Avena sativa (Oat).